Here is a 526-residue protein sequence, read N- to C-terminus: Major facilitator superfamily domain-containing protein 4A (526 aa).

A run of 12 helical transmembrane segments spans residues 21 to 41 (LTYW…GPTI), 55 to 75 (ITLV…IGGF), 84 to 104 (LSSL…IPLC), 107 to 127 (LLML…IDTI), 142 to 162 (VFLQ…PLIA), 215 to 235 (YAFW…FVLV), 297 to 317 (LSFF…DGIV), 341 to 361 (GYLT…AIPL), 377 to 397 (GVIV…FLFI), 401 to 421 (CLGL…EDIL), 430 to 450 (VLVT…GSVM), and 458 to 478 (FLLC…FLYF).

It belongs to the major facilitator superfamily.

It is found in the membrane. This chain is Major facilitator superfamily domain-containing protein 4A (mfsd4a), found in Danio rerio (Zebrafish).